A 222-amino-acid polypeptide reads, in one-letter code: Prolactin-2C5 (222 aa).

The signal sequence occupies residues 1–29 (MLPSLIQPCSWILLLLLVNSSLLWKNVAS). A disulfide bridge links Cys-33 with Cys-40. Asn-57 carries an N-linked (GlcNAc...) asparagine glycan. 2 cysteine pairs are disulfide-bonded: Cys-87/Cys-197 and Cys-214/Cys-222.

It belongs to the somatotropin/prolactin family. N-glycosylated and sialylated. As to expression, expressed in placenta (at protein level). Expressed in the tail hair follicle, with highest expression detected in the keratinocytes of the outer root sheath. Expressed in ear skin with lesser amounts in small intestine. Not detected in brain at 18 dpc, postnatal day 25 or postnatal day 55.

The protein resides in the secreted. In Mus musculus (Mouse), this protein is Prolactin-2C5.